The sequence spans 302 residues: Proline dehydrogenase 1 (302 aa).

Substrate is bound at residue K95. D129 is a catalytic residue. 2 residues coordinate FAD: M130 and Q158. R179 is an active-site residue. Residues 182–184 (KGA) and 221–222 (TH) contribute to the FAD site. Position 283–284 (283–284 (RR)) interacts with substrate.

The protein belongs to the proline oxidase family. FAD is required as a cofactor.

The catalysed reaction is L-proline + a quinone = (S)-1-pyrroline-5-carboxylate + a quinol + H(+). It functions in the pathway amino-acid degradation; L-proline degradation into L-glutamate; L-glutamate from L-proline: step 1/2. In terms of biological role, converts proline to delta-1-pyrroline-5-carboxylate. This is Proline dehydrogenase 1 (fadM) from Bacillus subtilis subsp. natto.